A 188-amino-acid polypeptide reads, in one-letter code: ATP synthase subunit delta (188 aa).

This sequence belongs to the ATPase delta chain family. As to quaternary structure, F-type ATPases have 2 components, F(1) - the catalytic core - and F(0) - the membrane proton channel. F(1) has five subunits: alpha(3), beta(3), gamma(1), delta(1), epsilon(1). F(0) has three main subunits: a(1), b(2) and c(10-14). The alpha and beta chains form an alternating ring which encloses part of the gamma chain. F(1) is attached to F(0) by a central stalk formed by the gamma and epsilon chains, while a peripheral stalk is formed by the delta and b chains.

Its subcellular location is the cell membrane. Functionally, f(1)F(0) ATP synthase produces ATP from ADP in the presence of a proton or sodium gradient. F-type ATPases consist of two structural domains, F(1) containing the extramembraneous catalytic core and F(0) containing the membrane proton channel, linked together by a central stalk and a peripheral stalk. During catalysis, ATP synthesis in the catalytic domain of F(1) is coupled via a rotary mechanism of the central stalk subunits to proton translocation. Its function is as follows. This protein is part of the stalk that links CF(0) to CF(1). It either transmits conformational changes from CF(0) to CF(1) or is implicated in proton conduction. The sequence is that of ATP synthase subunit delta from Lawsonia intracellularis (strain PHE/MN1-00).